Reading from the N-terminus, the 189-residue chain is Chitin synthase 1 (189 aa).

It belongs to the chitin synthase family.

The protein localises to the cell membrane. It carries out the reaction [(1-&gt;4)-N-acetyl-beta-D-glucosaminyl](n) + UDP-N-acetyl-alpha-D-glucosamine = [(1-&gt;4)-N-acetyl-beta-D-glucosaminyl](n+1) + UDP + H(+). Its function is as follows. Polymerizes chitin, a structural polymer of the cell wall and septum, by transferring the sugar moiety of UDP-GlcNAc to the non-reducing end of the growing chitin polymer. The polypeptide is Chitin synthase 1 (CHS1) (Exophiala exophialae (Black yeast-like fungus)).